Reading from the N-terminus, the 321-residue chain is Tetraacyldisaccharide 4'-kinase (321 aa).

54-61 (SVGGTGKT) provides a ligand contact to ATP.

Belongs to the LpxK family.

It catalyses the reaction a lipid A disaccharide + ATP = a lipid IVA + ADP + H(+). The protein operates within glycolipid biosynthesis; lipid IV(A) biosynthesis; lipid IV(A) from (3R)-3-hydroxytetradecanoyl-[acyl-carrier-protein] and UDP-N-acetyl-alpha-D-glucosamine: step 6/6. Functionally, transfers the gamma-phosphate of ATP to the 4'-position of a tetraacyldisaccharide 1-phosphate intermediate (termed DS-1-P) to form tetraacyldisaccharide 1,4'-bis-phosphate (lipid IVA). This Rickettsia typhi (strain ATCC VR-144 / Wilmington) protein is Tetraacyldisaccharide 4'-kinase.